We begin with the raw amino-acid sequence, 494 residues long: 4-trimethylaminobutyraldehyde dehydrogenase (494 aa).

Position 2 is an N-acetylserine (S2). K30 carries the post-translational modification N6-acetyllysine; alternate. Position 30 is an N6-succinyllysine; alternate (K30). Residue K59 is modified to N6-succinyllysine. Residues K180 and 232 to 236 each bind NAD(+); that span reads GSVPT. E254 functions as the Proton acceptor in the catalytic mechanism. The active-site Nucleophile is C288. K298 is modified (N6-acetyllysine). K303 is subject to N6-acetyllysine; alternate. Position 303 is an N6-succinyllysine; alternate (K303). Residue K344 is modified to N6-acetyllysine. E391 is a binding site for NAD(+).

This sequence belongs to the aldehyde dehydrogenase family. As to quaternary structure, homotetramer.

It localises to the cytoplasm. The protein localises to the cytosol. It catalyses the reaction 4-(trimethylamino)butanal + NAD(+) + H2O = 4-(trimethylamino)butanoate + NADH + 2 H(+). The catalysed reaction is an aldehyde + NAD(+) + H2O = a carboxylate + NADH + 2 H(+). It carries out the reaction 4-aminobutanal + NAD(+) + H2O = 4-aminobutanoate + NADH + 2 H(+). The enzyme catalyses formaldehyde + NAD(+) + H2O = formate + NADH + 2 H(+). It catalyses the reaction acetaldehyde + NAD(+) + H2O = acetate + NADH + 2 H(+). The catalysed reaction is imidazole-4-acetaldehyde + NAD(+) + H2O = imidazole-4-acetate + NADH + 2 H(+). It carries out the reaction acrolein + NAD(+) + H2O = acrylate + NADH + 2 H(+). The enzyme catalyses (5-hydroxyindol-3-yl)acetaldehyde + NAD(+) + H2O = (5-hydroxyindol-3-yl)acetate + NADH + 2 H(+). It catalyses the reaction 3,4-dihydroxyphenylacetaldehyde + NAD(+) + H2O = 3,4-dihydroxyphenylacetate + NADH + 2 H(+). The catalysed reaction is spermine monoaldehyde + NAD(+) + H2O = N-(2-carboxyethyl)spermidine + NADH + 2 H(+). It carries out the reaction propanal + NAD(+) + H2O = propanoate + NADH + 2 H(+). The enzyme catalyses butanal + NAD(+) + H2O = butanoate + NADH + 2 H(+). It catalyses the reaction pentanal + NAD(+) + H2O = pentanoate + NADH + 2 H(+). The catalysed reaction is hexanal + NAD(+) + H2O = hexanoate + NADH + 2 H(+). It functions in the pathway amine and polyamine biosynthesis; carnitine biosynthesis. Converts gamma-trimethylaminobutyraldehyde into gamma-butyrobetaine with high efficiency (in vitro). Can catalyze the irreversible oxidation of a broad range of aldehydes to the corresponding acids in an NAD-dependent reaction, but with low efficiency. Catalyzes the oxidation of aldehydes arising from biogenic amines and polyamines. The polypeptide is 4-trimethylaminobutyraldehyde dehydrogenase (Mus musculus (Mouse)).